We begin with the raw amino-acid sequence, 403 residues long: NADH-quinone oxidoreductase subunit D (403 aa).

This sequence belongs to the complex I 49 kDa subunit family. As to quaternary structure, NDH-1 is composed of 14 different subunits. Subunits NuoB, C, D, E, F, and G constitute the peripheral sector of the complex.

The protein resides in the cell inner membrane. It carries out the reaction a quinone + NADH + 5 H(+)(in) = a quinol + NAD(+) + 4 H(+)(out). Functionally, NDH-1 shuttles electrons from NADH, via FMN and iron-sulfur (Fe-S) centers, to quinones in the respiratory chain. The immediate electron acceptor for the enzyme in this species is believed to be ubiquinone. Couples the redox reaction to proton translocation (for every two electrons transferred, four hydrogen ions are translocated across the cytoplasmic membrane), and thus conserves the redox energy in a proton gradient. This Erythrobacter litoralis (strain HTCC2594) protein is NADH-quinone oxidoreductase subunit D.